The sequence spans 229 residues: Ribonuclease 3 (229 aa).

The region spanning 5 to 127 is the RNase III domain; sequence LARLERKLGY…LIGAIYLDAD (123 aa). Residue Glu40 participates in Mg(2+) binding. Asp44 is a catalytic residue. Asp113 and Glu116 together coordinate Mg(2+). The active site involves Glu116. The DRBM domain maps to 154–224; sequence DPKTRLQEFL…AASALIALGV (71 aa).

The protein belongs to the ribonuclease III family. In terms of assembly, homodimer. Mg(2+) serves as cofactor.

It is found in the cytoplasm. The enzyme catalyses Endonucleolytic cleavage to 5'-phosphomonoester.. Digests double-stranded RNA. Involved in the processing of primary rRNA transcript to yield the immediate precursors to the large and small rRNAs (23S and 16S). Processes some mRNAs, and tRNAs when they are encoded in the rRNA operon. Processes pre-crRNA and tracrRNA of type II CRISPR loci if present in the organism. This is Ribonuclease 3 from Pseudomonas putida (strain GB-1).